The following is a 129-amino-acid chain: Trefoil factor 2 (129 aa).

Positions 1-23 (MGPRGAPLLVVVLVLGLHALAEG) are cleaved as a signal peptide. P-type domains are found at residues 29-73 (CRCS…FHPL) and 79-122 (EQCV…FFPQ). 7 cysteine pairs are disulfide-bonded: cysteine 29–cysteine 127, cysteine 31–cysteine 58, cysteine 42–cysteine 57, cysteine 52–cysteine 69, cysteine 81–cysteine 107, cysteine 91–cysteine 106, and cysteine 101–cysteine 118.

Expressed in the digestive tract, where it was found predominantly in the stomach with highest expression in the antrum. It is secreted predominantly from antral mucous cells into the lumen of the gastrointestinal tract.

The protein resides in the secreted. Its function is as follows. Inhibits gastrointestinal motility and gastric acid secretion. Could function as a structural component of gastric mucus, possibly by stabilizing glycoproteins in the mucus gel through interactions with carbohydrate side chains. This is Trefoil factor 2 (Tff2) from Rattus norvegicus (Rat).